Here is a 1350-residue protein sequence, read N- to C-terminus: 1-phosphatidylinositol 4,5-bisphosphate phosphodiesterase gamma plc-3 (1350 aa).

Residues 1 to 40 are disordered; that stretch reads MQHGSLGPSSSSRKTTVTSTAGSVHLHHRSSNGFSTASRA. Residues 9–20 are compositionally biased toward low complexity; the sequence is SSSSRKTTVTST. The span at 31-40 shows a compositional bias: polar residues; that stretch reads SNGFSTASRA. Residues 352 to 503 form the PI-PLC X-box domain; it reads HDMSRPLSHY…LKKKIIVKHK (152 aa). Catalysis depends on residues His-367 and His-419. Residues 570-594 are disordered; that stretch reads NPNDDTVSVSGDEEREEETPSGFGV. SH2 domains follow at residues 605 to 704 and 715 to 804; these read WFHG…TIPC and WFSA…RFPV. An SH3 domain is found at 832 to 890; that stretch reads DKEVQARALRPYRGTADDELSFPANVIITVLRKEEGLWRGRYGSLTGWFPSAHVQEILP. One can recognise a PH domain in the interval 855–960; it reads ANVIITVLRK…WQNNLFELTR (106 aa). Positions 982-1092 constitute a PI-PLC Y-box domain; it reads LSNLVVYCQA…CGYLLKPDYM (111 aa). The C2 domain maps to 1099–1220; the sequence is PTNTEKFATA…CGFRSVPLKN (122 aa). A disordered region spans residues 1270–1350; it reads GDSIPREMAP…KFSFGKSSKS (81 aa). A compositionally biased stretch (polar residues) spans 1283–1329; it reads TSATDRSLDSPTNSESRATLLSGQRGSQDSMDSAAETSSIASGTISS. The span at 1340-1350 shows a compositional bias: low complexity; the sequence is KKFSFGKSSKS.

It depends on Ca(2+) as a cofactor. As to expression, expressed in intestine, isthmus of the pharynx, proximal gonad sheath cells, spermatheca and uterine sheath cells. In males, expressed in the valve cell, the vas deferens and retractor and ventral protactor muscles.

The enzyme catalyses a 1,2-diacyl-sn-glycero-3-phospho-(1D-myo-inositol-4,5-bisphosphate) + H2O = 1D-myo-inositol 1,4,5-trisphosphate + a 1,2-diacyl-sn-glycerol + H(+). Mediates the production of the second messenger molecules diacylglycerol (DAG) and inositol 1,4,5-trisphosphate (IP3) which plays an important role in the regulation of intracellular signaling cascades. Regulates basal and ovulatory sheath cell contractions by controlling Ca(2+) oscillations via IP3-mediated activation of IP3 receptor itr-1. In intestinal epithelial cells, regulates Ca(2+) oscillations which control posterior body wall muscle contractions required for defecation by IP3-mediated activation of itr-1 and probably by activating TRPM channels gon-2 and gtl-1 by reducing PIP2 levels. By activating tpa-1 via DAG production, required for the expression of antimicrobial peptide nlp-29 in the epidermis in response to fungal infection or physical injury. By triggering Ca(2+) transient via IP3-mediated activation of IPR3 receptor itr-1 in ASH sensory neurons, involved in avoidance behavior in response to nose touch. Probably by regulating neuronal transmission in ALA neurons, mediates the decrease in pharyngeal pumping and locomotion during the quiescent state that precedes each larval molt, downstream of lin-3 and receptor let-23 and upstream of tpa-1 but not itr-1. During embryogenesis, may play an role in epidermal morphogenesis together with plc-1. Probably downstream of receptor daf-2, regulates male-sex muscle excitability in the absence of food. The sequence is that of 1-phosphatidylinositol 4,5-bisphosphate phosphodiesterase gamma plc-3 from Caenorhabditis elegans.